We begin with the raw amino-acid sequence, 118 residues long: Small ribosomal subunit protein uS10 (118 aa).

Ser-37 bears the Phosphoserine mark.

This sequence belongs to the universal ribosomal protein uS10 family. In terms of assembly, component of the small ribosomal subunit (SSU). Mature yeast ribosomes consist of a small (40S) and a large (60S) subunit. The 40S small subunit contains 1 molecule of ribosomal RNA (18S rRNA) and at least 33 different proteins. The large 60S subunit contains 3 rRNA molecules (25S, 5.8S and 5S rRNA) and at least 46 different proteins.

It localises to the cytoplasm. Functionally, component of the ribosome, a large ribonucleoprotein complex responsible for the synthesis of proteins in the cell. The small ribosomal subunit (SSU) binds messenger RNAs (mRNAs) and translates the encoded message by selecting cognate aminoacyl-transfer RNA (tRNA) molecules. The large subunit (LSU) contains the ribosomal catalytic site termed the peptidyl transferase center (PTC), which catalyzes the formation of peptide bonds, thereby polymerizing the amino acids delivered by tRNAs into a polypeptide chain. The nascent polypeptides leave the ribosome through a tunnel in the LSU and interact with protein factors that function in enzymatic processing, targeting, and the membrane insertion of nascent chains at the exit of the ribosomal tunnel. This is Small ribosomal subunit protein uS10 (rps20) from Schizosaccharomyces pombe (strain 972 / ATCC 24843) (Fission yeast).